The primary structure comprises 367 residues: tRNA-specific 2-thiouridylase MnmA (367 aa).

ATP contacts are provided by residues Gly-11 to Ser-18 and Leu-37. Catalysis depends on Cys-99, which acts as the Nucleophile. Residues Cys-99 and Cys-195 are joined by a disulfide bond. Gly-123 contributes to the ATP binding site. Residues Lys-145–Gln-147 form an interaction with tRNA region. The active-site Cysteine persulfide intermediate is Cys-195. Positions Arg-304–Tyr-305 are interaction with tRNA.

This sequence belongs to the MnmA/TRMU family.

It is found in the cytoplasm. It carries out the reaction S-sulfanyl-L-cysteinyl-[protein] + uridine(34) in tRNA + AH2 + ATP = 2-thiouridine(34) in tRNA + L-cysteinyl-[protein] + A + AMP + diphosphate + H(+). Catalyzes the 2-thiolation of uridine at the wobble position (U34) of tRNA, leading to the formation of s(2)U34. This chain is tRNA-specific 2-thiouridylase MnmA, found in Chlorobium luteolum (strain DSM 273 / BCRC 81028 / 2530) (Pelodictyon luteolum).